The primary structure comprises 330 residues: Tryptophan--tRNA ligase (330 aa).

ATP is bound by residues 6–8 and 14–15; these read QPT and GN. The 'HIGH' region signature appears at 7–15; the sequence is PTGSLHLGN. D130 is an L-tryptophan binding site. ATP-binding positions include 142 to 144, V185, and 194 to 198; these read GED and KMSKS. Residues 194–198 carry the 'KMSKS' region motif; sequence KMSKS.

Belongs to the class-I aminoacyl-tRNA synthetase family. In terms of assembly, homodimer.

The protein localises to the cytoplasm. It catalyses the reaction tRNA(Trp) + L-tryptophan + ATP = L-tryptophyl-tRNA(Trp) + AMP + diphosphate + H(+). Catalyzes the attachment of tryptophan to tRNA(Trp). The protein is Tryptophan--tRNA ligase of Thermosynechococcus vestitus (strain NIES-2133 / IAM M-273 / BP-1).